Here is a 102-residue protein sequence, read N- to C-terminus: MAKGQSLQDPFLNALRRERVPVSIYLVNGIKLQGQIESFDQFVILLKNTVSQMVYKHAISTVVPSRPVSHHSNTPSGGTSNYHHGNNPSAPQQPQQESDDAE.

A Sm domain is found at 9–68; that stretch reads DPFLNALRRERVPVSIYLVNGIKLQGQIESFDQFVILLKNTVSQMVYKHAISTVVPSRPV. The tract at residues 64 to 102 is disordered; that stretch reads PSRPVSHHSNTPSGGTSNYHHGNNPSAPQQPQQESDDAE. Positions 70–96 are enriched in polar residues; that stretch reads HHSNTPSGGTSNYHHGNNPSAPQQPQQ.

This sequence belongs to the Hfq family. As to quaternary structure, homohexamer.

Functionally, RNA chaperone that binds small regulatory RNA (sRNAs) and mRNAs to facilitate mRNA translational regulation in response to envelope stress, environmental stress and changes in metabolite concentrations. Also binds with high specificity to tRNAs. The chain is RNA-binding protein Hfq from Serratia proteamaculans (strain 568).